Consider the following 1167-residue polypeptide: RNA-directed RNA polymerase (1167 aa).

Positions 553 to 735 (LTYGILAEAT…KALASYTGLE (183 aa)) constitute a RdRp catalytic domain.

This sequence belongs to the reoviridae RNA-directed RNA polymerase family. In terms of assembly, interacts with VP3 (Potential). Interacts with VP2 (Potential). Interacts with NSP5; this interaction is probably necessary for the formation of functional virus factories.

The protein localises to the virion. The catalysed reaction is RNA(n) + a ribonucleoside 5'-triphosphate = RNA(n+1) + diphosphate. Functionally, RNA-directed RNA polymerase that is involved in both transcription and genome replication. Together with VP3 capping enzyme, forms an enzyme complex positioned near the channels situated at each of the five-fold vertices of the core. Following infection, the outermost layer of the virus is lost, leaving a double-layered particle (DLP) made up of the core and VP6 shell. VP1 then catalyzes the transcription of fully conservative plus-strand genomic RNAs that are extruded through the DLP's channels into the cytoplasm where they function as mRNAs for translation of viral proteins. One copy of each of the viral (+)RNAs is also recruited during core assembly, together with newly synthesized polymerase complexes and VP2. The polymerase of these novo-formed particles catalyzes the synthesis of complementary minus-strands leading to dsDNA formation. To do so, the polymerase specifically recognizes conserved 3' sequence(s) in plus-strand RNA templates. Once dsRNA synthesis is complete, the polymerase switches to the transcriptional mode, thus providing secondary transcription. This chain is RNA-directed RNA polymerase, found in Rotavirus X (strain RVX/Human/China/NADRV-J19/1997/GXP[X]) (RV ADRV-N).